Here is a 139-residue protein sequence, read N- to C-terminus: Nucleoside diphosphate kinase (139 aa).

ATP is bound by residues K10, F58, R86, T92, R103, and N113. Residue H116 is the Pros-phosphohistidine intermediate of the active site.

It belongs to the NDK family. Homotetramer. The cofactor is Mg(2+).

It is found in the cytoplasm. The catalysed reaction is a 2'-deoxyribonucleoside 5'-diphosphate + ATP = a 2'-deoxyribonucleoside 5'-triphosphate + ADP. The enzyme catalyses a ribonucleoside 5'-diphosphate + ATP = a ribonucleoside 5'-triphosphate + ADP. In terms of biological role, major role in the synthesis of nucleoside triphosphates other than ATP. The ATP gamma phosphate is transferred to the NDP beta phosphate via a ping-pong mechanism, using a phosphorylated active-site intermediate. This is Nucleoside diphosphate kinase from Phenylobacterium zucineum (strain HLK1).